The sequence spans 230 residues: Voltage-gated hydrogen channel 1 (230 aa).

Topologically, residues 1–58 are cytoplasmic; sequence MAGCLRHFTSVGDDTKKKAWKEEDVEVAHEEEPKNTPHPFIASYSFRGALKWLFSSHK. The chain crosses the membrane as a helical span at residues 59–79; the sequence is FQIVIICLVILDALFVLVEVL. Residues 80 to 96 lie on the Extracellular side of the membrane; it reads LDLELLAEKVDHIIPEI. A helical transmembrane segment spans residues 97 to 119; the sequence is FHYLSISVLSFFILEIAGKLYAF. The Cytoplasmic segment spans residues 120–127; the sequence is RLEFFHHK. The chain crosses the membrane as a helical span at residues 128–148; the sequence is FEVFDAAIVVISFIIDIVYIS. Topologically, residues 149–155 are extracellular; that stretch reads REDIFNA. The helical transmembrane segment at 156-176 threads the bilayer; the sequence is VGLLILLRLWRVARIVNGIIV. Residues 177–226 adopt a coiled-coil conformation; the sequence is SVKTQAEDKIHRLKENQESLLEKVAHLEQQCAQQEQEIVRLQTLLQQHNV. Topologically, residues 177-230 are cytoplasmic; sequence SVKTQAEDKIHRLKENQESLLEKVAHLEQQCAQQEQEIVRLQTLLQQHNVFPAS.

Belongs to the hydrogen channel family. In terms of assembly, homodimer.

It is found in the membrane. Its subcellular location is the cell membrane. In terms of biological role, mediates the voltage-dependent proton permeability of excitable membranes. Forms a proton-selective channel through which protons may pass in accordance with their electrochemical gradient. The protein is Voltage-gated hydrogen channel 1 (hvcn1) of Xenopus tropicalis (Western clawed frog).